The primary structure comprises 766 residues: Nucleolar complex protein 2 (766 aa).

Residues 1–12 (MKLATKKIKTLG) are compositionally biased toward basic residues. Disordered stretches follow at residues 1-73 (MKLA…EELE), 100-154 (DTDD…DEED), and 674-766 (KTGV…LNEW). The segment covering 14 to 29 (SKPDLSKKKPAKDAIR) has biased composition (basic and acidic residues). The segment covering 33 to 42 (PQTTSETKVT) has biased composition (polar residues). Residues 58–67 (KTTKKGFKKS) show a composition bias toward basic residues. The span at 100–115 (DTDDDDDEEGDEEDKE) shows a compositional bias: acidic residues. Phosphothreonine is present on Thr-101. Basic and acidic residues predominate over residues 130–140 (EKYHKPSKDLE). Residues 141–154 (VASDESDFEVDEED) are compositionally biased toward acidic residues. Phosphoserine occurs at positions 143, 146, 691, 693, and 705. A compositionally biased stretch (acidic residues) spans 706–720 (DDDDDEDVQEEEEVE). Basic and acidic residues predominate over residues 757–766 (IVKDLDLNEW).

The protein belongs to the NOC2 family.

The protein localises to the nucleus. In Drosophila melanogaster (Fruit fly), this protein is Nucleolar complex protein 2.